We begin with the raw amino-acid sequence, 76 residues long: Demidefensin-3 (76 aa).

An N-terminal signal peptide occupies residues 1 to 22 (MRTLALHTAMLLLVALHAQAEA). The propeptide occupies 23-64 (RQARADEAAAQQQPGADDQGMAHSFTWPENAALPLSESERGL). A disordered region spans residues 25–45 (ARADEAAAQQQPGADDQGMAH). The span at 30-44 (AAAQQQPGADDQGMA) shows a compositional bias: low complexity. Cys68 and Cys73 are disulfide-bonded. Residues 74–76 (RLL) constitute a propeptide that is removed on maturation.

Belongs to the alpha-defensin family. Theta subfamily. In terms of assembly, forms a cyclic homodimer; disulfide-linked. This is a cyclic peptide.

Its function is as follows. Has antimicrobial activities against bacteria and fungi. The chain is Demidefensin-3 from Macaca mulatta (Rhesus macaque).